The following is a 1185-amino-acid chain: Calmodulin-binding transcription activator homolog 1 (1185 aa).

Positions 72-200 form a DNA-binding region, CG-1; sequence AVELFPCFKD…YLNVKTNNKI (129 aa). Disordered stretches follow at residues 252 to 277 and 390 to 411; these read GVNLPTSPLPQEPSSSTSRELERRNS and KIRSGSQESPMGPPSSSSVTST. A compositionally biased stretch (low complexity) spans 393–411; the sequence is SGSQESPMGPPSSSSVTST. The region spanning 418–498 is the IPT/TIG domain; it reads EMTPSSSSLK…ISTASEFTYE (81 aa). The ANK repeat unit spans residues 616-646; that stretch reads DGSTPLHTACKNSASRIARLIISIDSSAIDV. Residues 957–984 enclose the IQ domain; that stretch reads EAAMVIQRAYRVYRARSTTRRQEDIERR. Positions 1121 to 1185 are disordered; sequence CPQTSGDQRN…KPPYGCGTLA (65 aa). Basic and acidic residues predominate over residues 1128-1147; that stretch reads QRNKRDSDGERKRDAHHDAP.

This sequence belongs to the CAMTA family. As to quaternary structure, may interact with calmodulin. As to expression, expressed broadly in the nervous system.

It is found in the nucleus. Functionally, transcription factor. Positively modulates neuronal levels of the ubiquitous Ca2+ sensor calmodulin/cmd-1, probably by direct binding to the cmd-1 promoter, thereby regulating Ca2+ signaling, physiology, and behavior. This Caenorhabditis elegans protein is Calmodulin-binding transcription activator homolog 1.